Reading from the N-terminus, the 146-residue chain is Protein ADM2 (146 aa).

The first 25 residues, 1–25 (MAQLLMVTVTFGCISLLYLLPGTLS), serve as a signal peptide directing secretion. A propeptide spanning residues 26–96 (GSLGKGLRPR…HPGPQRHVGS (71 aa)) is cleaved from the precursor. Residues 29–99 (GKGLRPREPP…PQRHVGSRRP (71 aa)) form a disordered region. A disulfide bridge connects residues cysteine 108 and cysteine 113. Position 145 is a tyrosine amide (tyrosine 145).

Belongs to the adrenomedullin family. Expression was restricted to the intermediate and anterior lobes of the pituitary.

It is found in the secreted. In terms of biological role, intermedin/ADM2 is a peptide hormone that plays a role as physiological regulator of gastrointestinal and cardiovascular bioactivities mediated by the CALCRL-RAMPs receptor complexes. Activates the cAMP-dependent pathway through interaction with CALCRL-RAMP3 receptor complex. This Rattus norvegicus (Rat) protein is Protein ADM2.